The chain runs to 1342 residues: WD repeat-containing protein 19 (1342 aa).

WD repeat units follow at residues 11-51 (TWLG…RSEI), 52-92 (NLPG…TSQL), 95-134 (GMRD…KIPV), 137-175 (KHTK…IRQT), 273-311 (NHKD…DMYV), and 317-356 (EENK…LGDA). 6 TPR repeats span residues 736–769 (AQDL…AKHL), 775–808 (PFIS…DNKE), 840–873 (RVLK…DKAA), 895–928 (PKIH…QSVI), 951–984 (LDGA…NEAF), and 1020–1053 (EKRY…EDNV).

Component of the IFT complex A (IFT-A) complex. IFT-A complex is divided into a core subcomplex composed of IFT122:IFT140:WDR19 which is associated with TULP3 and a peripheral subcomplex composed of IFT43:WDR35:TTC21B. Interacts (via C-terminal region) with IFT122 (via C-terminal region). Interacts with BBS1. Interacts with TTC25. In terms of tissue distribution, some isoforms are tissue-specific. Highly expressed in the prostate. Lower expression in the cerebellum, pituitary gland, fetal lung, and pancreas. In normal prostate, expressed in both basal and luminal epithelial cells. No expression detected in fibromuscular stromal cells, endothelial cells, or infiltrating lymphocytes. Uniformed expression in prostate adenocarcinoma cells.

Its subcellular location is the cell projection. It is found in the cilium. It localises to the cytoplasm. The protein resides in the cytoskeleton. The protein localises to the cilium basal body. Its subcellular location is the photoreceptor outer segment. It is found in the flagellum. In terms of biological role, as component of the IFT complex A (IFT-A), a complex required for retrograde ciliary transport and entry into cilia of G protein-coupled receptors (GPCRs), it is involved in cilia function and/or assembly. Essential for functional IFT-A assembly and ciliary entry of GPCRs. Associates with the BBSome complex to mediate ciliary transport. The polypeptide is WD repeat-containing protein 19 (Homo sapiens (Human)).